The chain runs to 335 residues: Auxin-responsive protein IAA6 (335 aa).

Residues 51–55 (LKLGL) carry the EAR-like (transcriptional repression) motif. Disordered stretches follow at residues 81-102 (LSFFPKHSKTTSSTTTTTGAKR), 143-180 (KKGCCPPPPPPHGAPATPARNRPQTQGRGAAAPVVGWP), and 188-207 (NLASSSSSKHSPEPQNDNAN). Residues 217-321 (NPLVKINMDG…TAKRLRVLRS (105 aa)) form the PB1 domain.

Belongs to the Aux/IAA family. Homodimers and heterodimers. In terms of tissue distribution, highly expressed in roots. Expressed in shoots and flowers.

The protein localises to the nucleus. Its function is as follows. Aux/IAA proteins are short-lived transcriptional factors that function as repressors of early auxin response genes at low auxin concentrations. This chain is Auxin-responsive protein IAA6 (IAA6), found in Oryza sativa subsp. japonica (Rice).